The chain runs to 383 residues: Homoserine O-succinyltransferase (383 aa).

The AB hydrolase-1 domain maps to 51–360 (NAILLCHALS…EAEHGHDSFL (310 aa)). The Nucleophile role is filled by Ser-157. Arg-227 contributes to the substrate binding site. Residues Asp-323 and His-356 contribute to the active site. Asp-357 is a substrate binding site.

Belongs to the AB hydrolase superfamily. MetX family. In terms of assembly, homodimer.

Its subcellular location is the cytoplasm. It catalyses the reaction L-homoserine + succinyl-CoA = O-succinyl-L-homoserine + CoA. It participates in amino-acid biosynthesis; L-methionine biosynthesis via de novo pathway; O-succinyl-L-homoserine from L-homoserine: step 1/1. Its function is as follows. Transfers a succinyl group from succinyl-CoA to L-homoserine, forming succinyl-L-homoserine. In Acidithiobacillus ferrooxidans (strain ATCC 23270 / DSM 14882 / CIP 104768 / NCIMB 8455) (Ferrobacillus ferrooxidans (strain ATCC 23270)), this protein is Homoserine O-succinyltransferase.